The primary structure comprises 446 residues: 3-phosphoshikimate 1-carboxyvinyltransferase (446 aa).

Residues 1–20 (MSTWPAPSTATPVHATVTVP) are disordered. The 3-phosphoshikimate site is built by Lys-23, Ser-24, and Arg-28. Lys-23 is a phosphoenolpyruvate binding site. Residues Gly-100 and Arg-128 each coordinate phosphoenolpyruvate. 3-phosphoshikimate contacts are provided by Ser-171, Ser-172, Gln-173, Ser-200, Glu-315, and His-344. Gln-173 is a binding site for phosphoenolpyruvate. Glu-315 acts as the Proton acceptor in catalysis. Arg-348, Arg-389, and Lys-414 together coordinate phosphoenolpyruvate.

This sequence belongs to the EPSP synthase family. As to quaternary structure, monomer.

Its subcellular location is the cytoplasm. The catalysed reaction is 3-phosphoshikimate + phosphoenolpyruvate = 5-O-(1-carboxyvinyl)-3-phosphoshikimate + phosphate. The protein operates within metabolic intermediate biosynthesis; chorismate biosynthesis; chorismate from D-erythrose 4-phosphate and phosphoenolpyruvate: step 6/7. Its function is as follows. Catalyzes the transfer of the enolpyruvyl moiety of phosphoenolpyruvate (PEP) to the 5-hydroxyl of shikimate-3-phosphate (S3P) to produce enolpyruvyl shikimate-3-phosphate and inorganic phosphate. The chain is 3-phosphoshikimate 1-carboxyvinyltransferase from Mycolicibacterium vanbaalenii (strain DSM 7251 / JCM 13017 / BCRC 16820 / KCTC 9966 / NRRL B-24157 / PYR-1) (Mycobacterium vanbaalenii).